Here is a 1131-residue protein sequence, read N- to C-terminus: Topless-related protein 2 (1131 aa).

A LisH domain is found at 4 to 36 (LSRELVFLILQFLDEEKFKESVHKLEQESGFFF). The 59-residue stretch at 34 to 92 (FFFNIKYFEEKALAGEWDEVEKYLSGFTKVDDNRYSMKIFFEIRKQKYLEALDRNDRAK) folds into the CTLH domain. Phosphothreonine is present on threonine 214. WD repeat units lie at residues 345–385 (RQGS…KVVT), 407–446 (EPSISVTRVAWSPDGNLLGVSFTKHLIHVYAYQGSDLRQH), 451–493 (AHVG…FTFE), 495–535 (HEAP…SRVD), 585–624 (FRKKSAGVVQFDTTRNRFLAVGEDNQIKFWNMDNTNLLTV), 629–668 (GGLPNLPRLRFNKDGNLLAVTTADNGFKILANTDGLRTLR), 763–802 (DSVSKVARLLYTNSGVGVLALGSNGVQRLWKWIRNEQNPT), 829–867 (NPEGSVPCIALSKNDSYVMSACGGKVSLFNMMTFKVMTT), 870–910 (PPPP…VKTK), 913–952 (GHQKHITGLAFSTALNILVSSGADAQLFFWTADSWEKKKS), 959–999 (PGKA…CIHK), and 1005–1044 (ALSSPITSASYSCNSQLVYASFADGNIAVFDAESLRLRCR). The disordered stretch occupies residues 1099–1131 (VGVAAGSDKAGTENGRPSSSSAANNSSSDQIQR). Residues 1116-1131 (SSSSAANNSSSDQIQR) are compositionally biased toward low complexity.

As to quaternary structure, tetramer. Interacts with NINJA/AFPH2. Interacts with SMXL6, SMXL7 and SMXL8. Interacts with SPL (via EAR motif). Interacts with SPEAR3/TIE1.

Its subcellular location is the nucleus. Transcriptional corepressor. Negative regulator of jasmonate responses. In Arabidopsis thaliana (Mouse-ear cress), this protein is Topless-related protein 2 (TPR2).